Consider the following 301-residue polypeptide: CRISPR-associated endonuclease Cas1 (301 aa).

Mn(2+)-binding residues include Glu-133, His-200, and Asp-213.

This sequence belongs to the CRISPR-associated endonuclease Cas1 family. As to quaternary structure, homodimer, forms a heterotetramer with a Cas2 homodimer. The cofactor is Mg(2+). It depends on Mn(2+) as a cofactor.

In terms of biological role, CRISPR (clustered regularly interspaced short palindromic repeat), is an adaptive immune system that provides protection against mobile genetic elements (viruses, transposable elements and conjugative plasmids). CRISPR clusters contain spacers, sequences complementary to antecedent mobile elements, and target invading nucleic acids. CRISPR clusters are transcribed and processed into CRISPR RNA (crRNA). Acts as a dsDNA endonuclease. Involved in the integration of spacer DNA into the CRISPR cassette. This Clostridium sp. (strain SY8519) protein is CRISPR-associated endonuclease Cas1.